Here is a 360-residue protein sequence, read N- to C-terminus: G-box-binding factor 2 (360 aa).

Over residues 1–16 (MGSNEEGNPTNNSDKP) the composition is skewed to polar residues. Disordered stretches follow at residues 1-26 (MGSN…EQSN) and 150-275 (KVGS…AETE). Residues 164 to 184 (SQSSENDGSSNGSDGNTTGGE) are compositionally biased toward low complexity. A compositionally biased stretch (polar residues) spans 198 to 208 (TGERPSSQNSL). Basic and acidic residues predominate over residues 246-264 (NEKEVKREKRKQSNRESAR). The 64-residue stretch at 249–312 (EVKREKRKQS…EKLRLENEAI (64 aa)) folds into the bZIP domain. A basic motif region spans residues 251–270 (KREKRKQSNRESARRSRLRK). Positions 277–312 (LSVKVDALVAENMSLRSKLGQLNNESEKLRLENEAI) are leucine-zipper. Residues 335–352 (NSVSGSKTVQHQLLNASP) show a composition bias toward polar residues. A disordered region spans residues 335 to 360 (NSVSGSKTVQHQLLNASPITDPVAAS).

Belongs to the bZIP family. As to quaternary structure, DNA-binding heterodimer. Interacts with GBF4. Interacts with BZIP16 and BZIP68. In terms of tissue distribution, found in both light and dark grown leaves.

Its subcellular location is the nucleus. Functionally, binds to the G-box motif (5'-CCACGTGG-3') of the rbcS-1A gene promoter. G-box and G-box-like motifs are cis-acting elements defined in promoters of certain plant genes which are regulated by such diverse stimuli as light-induction or hormone control. GBF2 is found to bind asymmetrically to the G-box. This is G-box-binding factor 2 (GBF2) from Arabidopsis thaliana (Mouse-ear cress).